A 182-amino-acid chain; its full sequence is Oligoribonuclease (182 aa).

One can recognise an Exonuclease domain in the interval 8-171; it reads LIWIDLEMTG…DDIRESIKEL (164 aa). Residue tyrosine 129 is part of the active site.

The protein belongs to the oligoribonuclease family.

It localises to the cytoplasm. 3'-to-5' exoribonuclease specific for small oligoribonucleotides. The protein is Oligoribonuclease of Haemophilus influenzae (strain 86-028NP).